We begin with the raw amino-acid sequence, 721 residues long: Polyribonucleotide nucleotidyltransferase (721 aa).

Mg(2+) contacts are provided by D485 and D491. A KH domain is found at 552–611 (PKIYIVKIHPDKIREIIGPGGKVIRELQAMSNTRIEVDDSGTVKIAASTEEEARIAIKAV). An S1 motif domain is found at 621 to 689 (GEIYEGEVVR…PEGKIRLSRK (69 aa)). Residues 687–721 (SRKALLPAPEKGEEDEKSAPRSRRPGGNSDRRNNR) are disordered.

Belongs to the polyribonucleotide nucleotidyltransferase family. It depends on Mg(2+) as a cofactor.

The protein resides in the cytoplasm. It catalyses the reaction RNA(n+1) + phosphate = RNA(n) + a ribonucleoside 5'-diphosphate. In terms of biological role, involved in mRNA degradation. Catalyzes the phosphorolysis of single-stranded polyribonucleotides processively in the 3'- to 5'-direction. This Desulfosudis oleivorans (strain DSM 6200 / JCM 39069 / Hxd3) (Desulfococcus oleovorans) protein is Polyribonucleotide nucleotidyltransferase.